The following is a 37-amino-acid chain: ACVGENQQCADWAGPHCCDGYYCTCRYFPKCICRNNN.

Cystine bridges form between C2-C18, C9-C23, C17-C33, and C25-C31. N37 bears the Asparagine amide mark.

Belongs to the neurotoxin 07 (Beta/delta-agtx) family. 03 (aga-4) subfamily. Aga sub-subfamily. Expressed by the venom gland.

Its subcellular location is the secreted. In terms of biological role, insecticidal neurotoxin that induces an irreversible spastic paralysis when injected into insects. Modifies presynaptic voltage-gated sodium channels (Nav), causing them to open at the normal resting potential of the nerve. This leads to spontaneous release of neurotransmitter and repetitive action potentials in motor neurons. In Agelenopsis aperta (North American funnel-web spider), this protein is Mu-agatoxin-Aa1d.